A 432-amino-acid chain; its full sequence is Glutamate-1-semialdehyde 2,1-aminomutase 2 (432 aa).

Lys268 carries the post-translational modification N6-(pyridoxal phosphate)lysine.

This sequence belongs to the class-III pyridoxal-phosphate-dependent aminotransferase family. HemL subfamily. In terms of assembly, homodimer. Pyridoxal 5'-phosphate serves as cofactor.

The protein localises to the cytoplasm. It catalyses the reaction (S)-4-amino-5-oxopentanoate = 5-aminolevulinate. Its pathway is porphyrin-containing compound metabolism; protoporphyrin-IX biosynthesis; 5-aminolevulinate from L-glutamyl-tRNA(Glu): step 2/2. The chain is Glutamate-1-semialdehyde 2,1-aminomutase 2 from Listeria monocytogenes serotype 4b (strain CLIP80459).